A 664-amino-acid chain; its full sequence is Macoilin (664 aa).

4 consecutive transmembrane segments (helical) span residues Thr-28–Val-48, Ala-75–Ile-95, Val-120–Phe-140, and Phe-154–Val-174. Basic and acidic residues predominate over residues Arg-253–Lys-265. Residues Arg-253–Asn-274 form a disordered region. A Phosphoserine modification is found at Ser-305. The segment covering Lys-320–Ser-348 has biased composition (polar residues). The tract at residues Lys-320–Asn-375 is disordered. The N-linked (GlcNAc...) asparagine glycan is linked to Asn-324. Ser-332 is subject to Phosphoserine. Asn-340 and Asn-452 each carry an N-linked (GlcNAc...) asparagine glycan. Residues Thr-630 to Lys-664 form a disordered region. Phosphoserine occurs at positions 631 and 634. Residue Asn-655 is glycosylated (N-linked (GlcNAc...) asparagine).

This sequence belongs to the macoilin family.

It localises to the rough endoplasmic reticulum membrane. It is found in the nucleus membrane. Its function is as follows. Plays a role in the regulation of neuronal activity. This is Macoilin (MACO1) from Pan troglodytes (Chimpanzee).